Reading from the N-terminus, the 268-residue chain is MTPSKWDDEEESVSPPPVVNRRKFDDEEDEEVLDSWDAAEDSEVEREKAAKAAEAKAKAEAEAAAKKKSKAQRIEEHKAERRKNAEADSEEDEDEDEDEAEKRARLRRTEKDSDLKHAEDLFGDIDLNRSRNRGAPKAIVISDSADPTQAVDLSAMPLFKPTTKDQFARLTTTLIPLLTAHSKKPHYALWAQEFTKQLVKELNSGDVKKIASALTTVSNEKMREERAADKGSKKSKAAKTKVSLVANRDNKIDATSYDDDGLEDDDFM.

Disordered regions lie at residues 1 to 117 and 219 to 242; these read MTPS…DLKH and NEKMREERAADKGSKKSKAAKTKV. Over residues 26-44 the composition is skewed to acidic residues; sequence DEEDEEVLDSWDAAEDSEV. Residues 40–95 are a coiled coil; that stretch reads EDSEVEREKAAKAAEAKAKAEAEAAAKKKSKAQRIEEHKAERRKNAEADSEEDEDE. Composition is skewed to basic and acidic residues over residues 45 to 65 and 72 to 86; these read EREKAAKAAEAKAKAEAEAAA and QRIEEHKAERRKNAE. Over residues 87-99 the composition is skewed to acidic residues; the sequence is ADSEEDEDEDEDE. 2 stretches are compositionally biased toward basic and acidic residues: residues 100–117 and 220–232; these read AEKRARLRRTEKDSDLKH and EKMREERAADKGS.

Belongs to the eIF-3 subunit J family. In terms of assembly, component of the eukaryotic translation initiation factor 3 (eIF-3) complex.

The protein localises to the cytoplasm. In terms of biological role, component of the eukaryotic translation initiation factor 3 (eIF-3) complex, which is involved in protein synthesis of a specialized repertoire of mRNAs and, together with other initiation factors, stimulates binding of mRNA and methionyl-tRNAi to the 40S ribosome. The eIF-3 complex specifically targets and initiates translation of a subset of mRNAs involved in cell proliferation. In Aspergillus clavatus (strain ATCC 1007 / CBS 513.65 / DSM 816 / NCTC 3887 / NRRL 1 / QM 1276 / 107), this protein is Eukaryotic translation initiation factor 3 subunit J (hcr1).